Consider the following 188-residue polypeptide: dTTP/UTP pyrophosphatase (188 aa).

Asp-70 serves as the catalytic Proton acceptor.

The protein belongs to the Maf family. YhdE subfamily. A divalent metal cation serves as cofactor.

It is found in the cytoplasm. It carries out the reaction dTTP + H2O = dTMP + diphosphate + H(+). It catalyses the reaction UTP + H2O = UMP + diphosphate + H(+). In terms of biological role, nucleoside triphosphate pyrophosphatase that hydrolyzes dTTP and UTP. May have a dual role in cell division arrest and in preventing the incorporation of modified nucleotides into cellular nucleic acids. The polypeptide is dTTP/UTP pyrophosphatase (Clostridium botulinum (strain Eklund 17B / Type B)).